The primary structure comprises 215 residues: Cytochrome b6 (215 aa).

The helical transmembrane segment at 32-52 threads the bilayer; sequence IFYCIGGITFTCFLVQVATGF. Heme c is bound at residue cysteine 35. Positions 37, 83, 86, 100, 103, and 114 each coordinate heme b. Residues 90–110 form a helical membrane-spanning segment; sequence ASMMVLMMVLHVFRVYLTGGF. A run of 2 helical transmembrane segments spans residues 116-136 and 186-206; these read LTWV…VTGY and LHTF…FLMI. Heme b-binding residues include histidine 187 and histidine 202. Heme c is bound by residues arginine 207 and isoleucine 211. Serine 212 lines the heme b pocket.

This sequence belongs to the cytochrome b family. PetB subfamily. In terms of assembly, the 4 large subunits of the cytochrome b6-f complex are cytochrome b6, subunit IV (17 kDa polypeptide, PetD), cytochrome f and the Rieske protein, while the 4 small subunits are PetG, PetL, PetM and PetN. The complex functions as a dimer. Heme b serves as cofactor. Heme c is required as a cofactor. The N-terminus is blocked.

It localises to the plastid. The protein localises to the chloroplast thylakoid membrane. Its function is as follows. Component of the cytochrome b6-f complex, which mediates electron transfer between photosystem II (PSII) and photosystem I (PSI), cyclic electron flow around PSI, and state transitions. This is Cytochrome b6 from Chlamydomonas reinhardtii (Chlamydomonas smithii).